The chain runs to 240 residues: Transcriptional regulatory protein ChvI (240 aa).

The region spanning 3 to 116 (TIALVDDDRN…LLVERVKAIL (114 aa)) is the Response regulatory domain. Positions 8, 9, and 52 each coordinate Mg(2+). Aspartate 52 carries the 4-aspartylphosphate modification. Positions 139-238 (SRSLERGQLV…LYGVGYRFRE (100 aa)) form a DNA-binding region, ompR/PhoB-type.

The cofactor is Mg(2+). Post-translationally, phosphorylated by ChvG.

It is found in the cytoplasm. Its pathway is glycan metabolism; exopolysaccharide biosynthesis. Functionally, member of a two-component regulatory system ChvG(ExoS)/ChvI involved in regulating the production of succinoglycan. This is Transcriptional regulatory protein ChvI (chvI) from Rhizobium meliloti (strain 1021) (Ensifer meliloti).